An 89-amino-acid polypeptide reads, in one-letter code: Small ribosomal subunit protein bS20 (89 aa).

Positions 1–26 (MANSPQAKKRARQNEKNRKHNASLRS) are disordered. A compositionally biased stretch (basic residues) spans 7–22 (AKKRARQNEKNRKHNA).

Belongs to the bacterial ribosomal protein bS20 family.

In terms of biological role, binds directly to 16S ribosomal RNA. The chain is Small ribosomal subunit protein bS20 from Marinobacter nauticus (strain ATCC 700491 / DSM 11845 / VT8) (Marinobacter aquaeolei).